Here is a 303-residue protein sequence, read N- to C-terminus: Phosphatidylglycerol--prolipoprotein diacylglyceryl transferase (303 aa).

Transmembrane regions (helical) follow at residues 18-38, 58-78, and 107-127; these read VGFFTLRWYGLLIAFAVLIGL, LLPILVISSIIGARAYYVIFE, and WQGGIAIHGALLAGTIAILIF. R154 is a binding site for a 1,2-diacyl-sn-glycero-3-phospho-(1'-sn-glycerol). The next 2 membrane-spanning stretches (helical) occupy residues 193–213 and 266–286; these read PTFLYESIWNILLFLCLISLI and IAQLISTILFGLGLLGLFWIY.

It belongs to the Lgt family.

It is found in the cell inner membrane. The enzyme catalyses L-cysteinyl-[prolipoprotein] + a 1,2-diacyl-sn-glycero-3-phospho-(1'-sn-glycerol) = an S-1,2-diacyl-sn-glyceryl-L-cysteinyl-[prolipoprotein] + sn-glycerol 1-phosphate + H(+). It participates in protein modification; lipoprotein biosynthesis (diacylglyceryl transfer). Catalyzes the transfer of the diacylglyceryl group from phosphatidylglycerol to the sulfhydryl group of the N-terminal cysteine of a prolipoprotein, the first step in the formation of mature lipoproteins. In Prochlorococcus marinus (strain MIT 9211), this protein is Phosphatidylglycerol--prolipoprotein diacylglyceryl transferase.